Consider the following 173-residue polypeptide: 5-hydroxymethyl-dUMP N-hydrolase (173 aa).

At Ala-2 the chain carries N-acetylalanine. Gly-16 lines the 5-hydroxymethyl-dUMP pocket. A Phosphoserine modification is found at Ser-17. The 5-hydroxymethyl-dUMP site is built by Ile-18, Arg-19, Gly-20, Ser-87, Gly-89, and Glu-93. A Phosphoserine modification is found at Ser-87. 4 positions are modified to phosphoserine: Ser-112, Ser-117, Ser-127, and Ser-158. Position 117 (Ser-117) interacts with 5-hydroxymethyl-dUMP.

Belongs to the 2'-deoxynucleoside 5'-phosphate N-hydrolase 1 family. In terms of assembly, monomer and homodimer.

It localises to the cytoplasm. The protein localises to the nucleus. It carries out the reaction 5-hydroxymethyl-dUMP + H2O = 5-hydroxymethyluracil + 2-deoxy-D-ribose 5-phosphate. Its function is as follows. Part of a nucleotide salvage pathway that eliminates epigenetically modified 5-hydroxymethyl-dCMP (hmdCMP) in a two-step process entailing deamination to cytotoxic 5-hydroxymethyl-dUMP (hmdUMP), followed by its hydrolysis into 5-hydroxymethyluracil (hmU) and 2-deoxy-D-ribose 5-phosphate (deoxyribosephosphate). Catalyzes the second step in that pathway, the hydrolysis of the N-glycosidic bond in hmdUMP, degrading this cytotoxic nucleotide to avoid its genomic integration. The polypeptide is 5-hydroxymethyl-dUMP N-hydrolase (Mus musculus (Mouse)).